Consider the following 886-residue polypeptide: Translation initiation factor IF-2 (886 aa).

3 disordered regions span residues 1–25 (MSET…LKRP), 50–229 (RRAL…PAEE), and 253–272 (KGAE…TGDE). The span at 50-60 (RRALGEPHVLR) shows a compositional bias: basic and acidic residues. Positions 63 to 73 (APALDVVAPAP) are enriched in low complexity. Pro residues predominate over residues 74–83 (QAAPPAPTQQ). The span at 84–106 (PQPRVASRPQPQQRSSSGVILRS) shows a compositional bias: low complexity. Residues 107 to 181 (LTEEEREARS…KRRSESEAKR (75 aa)) show a composition bias toward basic and acidic residues. The segment covering 185-225 (GGEPAPAGANAAPRKAPALSAAPGSAAPSGQPGPAGAVGAR) has biased composition (low complexity). The region spanning 383 to 553 (SRPPVVTIMG…ALQAELLDLK (171 aa)) is the tr-type G domain. The tract at residues 392–399 (GHVDHGKT) is G1. A GTP-binding site is contributed by 392-399 (GHVDHGKT). Positions 417 to 421 (GITQH) are G2. The interval 439-442 (DTPG) is G3. GTP-binding positions include 439–443 (DTPGH) and 493–496 (NKID). Positions 493–496 (NKID) are G4. The segment at 529 to 531 (SAT) is G5.

This sequence belongs to the TRAFAC class translation factor GTPase superfamily. Classic translation factor GTPase family. IF-2 subfamily.

It is found in the cytoplasm. In terms of biological role, one of the essential components for the initiation of protein synthesis. Protects formylmethionyl-tRNA from spontaneous hydrolysis and promotes its binding to the 30S ribosomal subunits. Also involved in the hydrolysis of GTP during the formation of the 70S ribosomal complex. This Methylocella silvestris (strain DSM 15510 / CIP 108128 / LMG 27833 / NCIMB 13906 / BL2) protein is Translation initiation factor IF-2.